The sequence spans 240 residues: Urease accessory protein UreF (240 aa).

It belongs to the UreF family. UreD, UreF and UreG form a complex that acts as a GTP-hydrolysis-dependent molecular chaperone, activating the urease apoprotein by helping to assemble the nickel containing metallocenter of UreC. The UreE protein probably delivers the nickel.

The protein resides in the cytoplasm. In terms of biological role, required for maturation of urease via the functional incorporation of the urease nickel metallocenter. This is Urease accessory protein UreF from Rhodopseudomonas palustris (strain TIE-1).